The following is a 152-amino-acid chain: Deoxyuridine 5'-triphosphate nucleotidohydrolase (152 aa).

Substrate-binding positions include 71–73 (RSG), asparagine 84, 88–90 (LID), and methionine 98.

Belongs to the dUTPase family. Requires Mg(2+) as cofactor.

It catalyses the reaction dUTP + H2O = dUMP + diphosphate + H(+). The protein operates within pyrimidine metabolism; dUMP biosynthesis; dUMP from dCTP (dUTP route): step 2/2. Its function is as follows. This enzyme is involved in nucleotide metabolism: it produces dUMP, the immediate precursor of thymidine nucleotides and it decreases the intracellular concentration of dUTP so that uracil cannot be incorporated into DNA. This Shewanella amazonensis (strain ATCC BAA-1098 / SB2B) protein is Deoxyuridine 5'-triphosphate nucleotidohydrolase.